The chain runs to 147 residues: Hemoglobin subunit beta-3 (147 aa).

One can recognise a Globin domain in the interval 3–147 (HWTAEEKAVI…LVDALSHSYH (145 aa)). Heme b contacts are provided by histidine 64 and histidine 93.

It belongs to the globin family. Heterotetramer of two alpha chains and two beta chains. Red blood cells.

Functionally, this is a tadpole (larval) beta chain. This is Hemoglobin subunit beta-3 from Aquarana catesbeiana (American bullfrog).